Consider the following 374-residue polypeptide: Cytochrome b (374 aa).

4 helical membrane-spanning segments follow: residues 25 to 45, 69 to 90, 105 to 125, and 170 to 190; these read FGSM…FLAI, WIIQ…YMHI, WLSG…GYVL, and FFAL…IHII. Heme b-binding residues include His-75 and His-89. Heme b-binding residues include His-174 and His-188. His-193 contacts a ubiquinone. The next 4 membrane-spanning stretches (helical) occupy residues 218 to 238, 280 to 300, 312 to 332, and 339 to 358; these read YKDM…LSFT, LGGA…PFTH, LAQI…WTAT, and FITI…MINP.

It belongs to the cytochrome b family. In terms of assembly, the cytochrome bc1 complex contains 3 respiratory subunits (MT-CYB, CYC1 and UQCRFS1), 2 core proteins (UQCRC1 and UQCRC2) and probably 6 low-molecular weight proteins. Heme b serves as cofactor.

The protein resides in the mitochondrion inner membrane. Functionally, component of the ubiquinol-cytochrome c reductase complex (complex III or cytochrome b-c1 complex) that is part of the mitochondrial respiratory chain. The b-c1 complex mediates electron transfer from ubiquinol to cytochrome c. Contributes to the generation of a proton gradient across the mitochondrial membrane that is then used for ATP synthesis. The sequence is that of Cytochrome b (MT-CYB) from Calliophis bivirgatus (Blue Malaysian coral snake).